Consider the following 253-residue polypeptide: MTTANIIDLSGNSKGEIALPEVFSEIFRPDLIKKAVLSAQANRLQPYGTKLYAGMQTSAHSWGSGRGVAQVPRISNGSRVARIPQAVGGRRAHPPKTETDRTEKINKKEKRLAVRSAIAATIDADLVKARGHKFTAEVPFVADDAIEGLVKIKEVISFLQAAGLYDDIIRAKEGKHIRAGKGKRRGRKYKNRKSVLIVTGEESLLSKAANNLPGVDVATVTALNAELLAPGTHAGRLTVWTQSAITNMEGMFL.

The protein belongs to the universal ribosomal protein uL4 family. Part of the 50S ribosomal subunit.

Functionally, one of the primary rRNA binding proteins, this protein initially binds near the 5'-end of the 23S rRNA. It is important during the early stages of 50S assembly. It makes multiple contacts with different domains of the 23S rRNA in the assembled 50S subunit and ribosome. In terms of biological role, forms part of the polypeptide exit tunnel. The sequence is that of Large ribosomal subunit protein uL4 from Methanococcoides burtonii (strain DSM 6242 / NBRC 107633 / OCM 468 / ACE-M).